The sequence spans 369 residues: ATP-dependent (S)-NAD(P)H-hydrate dehydratase (369 aa).

Residues Leu14–Leu356 enclose the YjeF C-terminal domain. Residues Gly126 and Asn179–Arg185 each bind (6S)-NADPHX. ATP-binding positions include Lys231–Asp235 and Gly250–Gly259. (6S)-NADPHX is bound at residue Asp260. Residues Gly284–Lys306 show a composition bias toward basic and acidic residues. The tract at residues Gly284–Arg307 is disordered.

Belongs to the NnrD/CARKD family. Requires Mg(2+) as cofactor.

It is found in the cytoplasm. It carries out the reaction (6S)-NADHX + ATP = ADP + phosphate + NADH + H(+). The catalysed reaction is (6S)-NADPHX + ATP = ADP + phosphate + NADPH + H(+). In terms of biological role, catalyzes the dehydration of the S-form of NAD(P)HX at the expense of ATP, which is converted to ADP. Together with NAD(P)HX epimerase, which catalyzes the epimerization of the S- and R-forms, the enzyme allows the repair of both epimers of NAD(P)HX, a damaged form of NAD(P)H that is a result of enzymatic or heat-dependent hydration. The polypeptide is ATP-dependent (S)-NAD(P)H-hydrate dehydratase (Emericella nidulans (strain FGSC A4 / ATCC 38163 / CBS 112.46 / NRRL 194 / M139) (Aspergillus nidulans)).